We begin with the raw amino-acid sequence, 228 residues long: PKHD-type hydroxylase YbiX (228 aa).

One can recognise a Fe2OG dioxygenase domain in the interval 78–177 (TLSTPLFNRY…RVASFIWIQS (100 aa)). 3 residues coordinate Fe cation: His-96, Asp-98, and His-158. Arg-168 is a binding site for 2-oxoglutarate.

The cofactor is Fe(2+). It depends on L-ascorbate as a cofactor.

The chain is PKHD-type hydroxylase YbiX from Escherichia coli O157:H7.